Consider the following 334-residue polypeptide: Forkhead box protein N2 (334 aa).

Disordered stretches follow at residues 1 to 52 (MGPV…SGTT) and 83 to 108 (SPLY…ASSK). Positions 108–204 (KPPYSFSLLI…QALKKQPFSS (97 aa)) form a DNA-binding region, fork-head.

Its subcellular location is the nucleus. The chain is Forkhead box protein N2 from Xenopus tropicalis (Western clawed frog).